Here is a 204-residue protein sequence, read N- to C-terminus: N-alpha-acetyltransferase 40 (204 aa).

An N-acetyltransferase domain is found at 39–202 (EIYHHLEKGL…YYILYTKSRK (164 aa)). Residues Tyr64, 107 to 109 (TVE), and Tyr118 each bind substrate. Residues 120-122 (IQL) and 128-133 (GRNVGK) contribute to the acetyl-CoA site. Thr154 is a substrate binding site. Acetyl-CoA is bound at residue Asn159. A substrate-binding site is contributed by Ser176.

It belongs to the acetyltransferase family. NAA40 subfamily.

Its subcellular location is the cytoplasm. It localises to the nucleus. The catalysed reaction is N-terminal L-seryl-[histone H4] + acetyl-CoA = N-terminal N(alpha)-acetyl-L-seryl-[histone H4] + CoA + H(+). It carries out the reaction N-terminal L-seryl-[histone H2A] + acetyl-CoA = N-terminal N(alpha)-acetyl-L-seryl-[histone H2A] + CoA + H(+). In terms of biological role, N-alpha-acetyltransferase that specifically mediates the acetylation of the N-terminal residues of histones H4 and H2A. The chain is N-alpha-acetyltransferase 40 from Schizosaccharomyces pombe (strain 972 / ATCC 24843) (Fission yeast).